The primary structure comprises 165 residues: Plastocyanin, chloroplastic (165 aa).

Residues 1 to 66 constitute a chloroplast transit peptide; it reads MATVTSSAAV…AGILAGNAMA (66 aa). The Plastocyanin-like domain occupies 67-165; the sequence is AEVLLGSSDG…AGMVGKVTVN (99 aa). Residues histidine 103, cysteine 150, histidine 153, and methionine 158 each coordinate Cu cation.

This sequence belongs to the plastocyanin family. Cu(2+) serves as cofactor.

Its subcellular location is the plastid. The protein localises to the chloroplast thylakoid membrane. In terms of biological role, participates in electron transfer between P700 and the cytochrome b6-f complex in photosystem I. The protein is Plastocyanin, chloroplastic (PETE) of Silene latifolia subsp. alba (White campion).